The following is a 1463-amino-acid chain: Collagen alpha-1(I) chain (1463 aa).

Residues 1–22 (MFSFVDLRLLLLLAATALLTHG) form the signal peptide. A propeptide spans 23-161 (QEEGQEEGQE…PPGLGGNFAP (139 aa)) (N-terminal propeptide). Residues 38–96 (VTCVQNGLRYHDRDVWKPVPCQICVCDNGNVLCDDVICDELKDCPNAKVPTDECCPVCP) form the VWFC domain. The disordered stretch occupies residues 98 to 1217 (GQESPTDQET…AHDGGRYYRA (1120 aa)). The span at 138–153 (PGLPGPPGPPGPPGPP) shows a compositional bias: pro residues. Gln162 is subject to Pyrrolidone carboxylic acid. The nonhelical region (N-terminal) stretch occupies residues 162 to 177 (QLSYGYDEKSTGISVP). Lys170 carries the post-translational modification Allysine. Ser171 is subject to Phosphoserine. The triple-helical region stretch occupies residues 178 to 1191 (GPMGPSGPRG…PGPPGPPGPP (1014 aa)). Residues Pro189, Pro192, Pro195, Pro204, Pro207, Pro210, Pro225, Pro240, Pro246, Pro255, and Pro261 each carry the 4-hydroxyproline modification. The segment covering 197–216 (PQGFQGPPGEPGEPGASGPM) has biased composition (low complexity). Residues 228-242 (NGDDGEAGKPGRPGE) show a composition bias toward basic and acidic residues. Lys264 is modified (5-hydroxylysine; alternate). O-linked (Gal...) hydroxylysine; alternate glycosylation occurs at Lys264. The residue at position 270 (Ser270) is a Phosphoserine. Lys276 and Lys285 each carry 5-hydroxylysine. A compositionally biased stretch (low complexity) spans 278–294 (DAGPAGPKGEPGSPGEN). Residues Pro288, Pro291, Pro297, Pro306, and Pro312 each carry the 4-hydroxyproline modification. Positions 317–330 (PAGARGNDGATGAA) are enriched in low complexity. Pro residues predominate over residues 332 to 344 (PPGPTGPAGPPGF). Pro333, Pro342, and Pro345 each carry 4-hydroxyproline. Positions 349-358 (GAKGEGGPQG) are enriched in gly residues. 4-hydroxyproline is present on residues Pro372, Pro375, Pro387, Pro393, Pro402, Pro408, Pro411, and Pro426. Positions 378–417 (AGAAGPAGNPGADGQPGAKGANGAPGIAGAPGFPGARGPS) are enriched in low complexity. Lys429 carries the post-translational modification 5-hydroxylysine. Residues Pro435, Pro438, Pro450, Pro459, Pro474, Pro480, Pro489, and Pro495 each carry the 4-hydroxyproline modification. The segment covering 484–493 (GERGGPGSRG) has biased composition (gly residues). The span at 494–525 (FPGADGVAGPKGPAGERGAPGPAGPKGSPGEA) shows a compositional bias: low complexity. Residue Lys504 is modified to 5-hydroxylysine. Residues Pro513, Pro522, Pro528, Pro534, Pro543, Pro546, Pro555, Pro564, Pro570, Pro582, Pro591, Pro600, Pro603, Pro621, Pro639, Pro645, Pro651, Pro657, Pro663, Pro669, Pro681, Pro690, Pro702, Pro714, Pro717, Pro723, Pro729, and Pro738 each carry the 4-hydroxyproline modification. A compositionally biased stretch (low complexity) spans 537-563 (KGLTGSPGSPGPDGKTGPPGPAGQDGR). The segment covering 572–591 (ARGQAGVMGFPGPKGAAGEP) has biased composition (low complexity). Low complexity predominate over residues 633-660 (QGPAGSPGFQGLPGPAGPPGEAGKPGEQ). Over residues 695–723 (PRGANGAPGNDGAKGDAGAPGAPGSQGAP) the composition is skewed to low complexity. The short motif at 744 to 746 (RGD) is the Cell attachment site element. Lys750 bears the 5-hydroxylysine mark. 4-hydroxyproline occurs at positions 756, 771, and 777. Over residues 783-797 (AGPSGPAGPTGARGA) the composition is skewed to low complexity. The residue at position 786 (Ser786) is a Phosphoserine. 4-hydroxyproline is present on residues Pro798, Pro804, Pro807, Pro816, Pro822, Pro840, Pro849, and Pro858. The span at 810–837 (AGFAGPPGADGQPGAKGEPGDAGAKGDA) shows a compositional bias: low complexity. Residues 839 to 851 (PPGPAGPAGPPGP) show a composition bias toward pro residues. Over residues 852–882 (IGNVGAPGPKGARGSAGPPGATGFPGAAGRV) the composition is skewed to low complexity. Lys861 bears the 5-hydroxylysine mark. A 4-hydroxyproline mark is found at Pro870 and Pro876. Position 884 is a 3-hydroxyproline (Pro884). 16 positions are modified to 4-hydroxyproline: Pro885, Pro894, Pro897, Pro918, Pro927, Pro936, Pro945, Pro963, Pro972, Pro975, Pro981, Pro996, Pro1002, Pro1008, Pro1017, and Pro1023. The segment covering 930 to 954 (AGEKGAPGADGPAGAPGTPGPQGIA) has biased composition (low complexity). Residues 995–1005 (PPGPMGPPGLA) show a composition bias toward pro residues. At Lys1032 the chain carries 5-hydroxylysine. The segment covering 1041-1056 (AGPPGAPGAPGAPGPV) has biased composition (pro residues). Pro1044, Pro1047, and Pro1050 each carry 4-hydroxyproline. Residues 1077 to 1091 (IGPVGARGPAGPQGP) show a composition bias toward low complexity. The short motif at 1092–1094 (RGD) is the Cell attachment site element. The span at 1092–1106 (RGDKGETGEQGDRGI) shows a compositional bias: basic and acidic residues. 5-hydroxylysine is present on Lys1095. Lys1107 is subject to 5-hydroxylysine; alternate. O-linked (Gal...) hydroxylysine; alternate glycosylation is present at Lys1107. 4-hydroxyproline is present on residues Pro1119, Pro1122, Pro1125, Pro1143, and Pro1158. Residues 1125–1149 (PGEQGPSGASGPAGPRGPPGSAGSP) show a composition bias toward low complexity. Position 1163 is a 3-hydroxyproline (Pro1163). Pro1164 carries the 4-hydroxyproline modification. Residues 1176–1191 (AGPPGPPGPPGPPGPP) show a composition bias toward pro residues. Residue Pro1178 is modified to 3-hydroxyproline. 4-hydroxyproline is present on Pro1179. Position 1181 is a 3-hydroxyproline (Pro1181). A 4-hydroxyproline modification is found at Pro1182. Pro1184 is subject to 3-hydroxyproline. 3 positions are modified to 4-hydroxyproline: Pro1185, Pro1188, and Pro1191. The interval 1192-1215 (SGGYDLSFLPQPPQEKAHDGGRYY) is nonhelical region (C-terminal). Basic and acidic residues predominate over residues 1206-1217 (EKAHDGGRYYRA). An Allysine modification is found at Lys1207. Residues 1218 to 1463 (DDANVVRDRD…GFDVGPACFL (246 aa)) constitute a propeptide, C-terminal propeptide. A Fibrillar collagen NC1 domain is found at 1228–1463 (LEVDTTLKSL…GFDVGPACFL (236 aa)). 3 disulfides stabilise this stretch: Cys1258–Cys1290, Cys1298–Cys1461, and Cys1369–Cys1414. Positions 1276, 1278, 1279, 1281, and 1284 each coordinate Ca(2+).

It belongs to the fibrillar collagen family. In terms of assembly, trimers of one alpha 2(I) and two alpha 1(I) chains. Interacts with MRC2. Interacts with TRAM2. Interacts with MFAP4 in a Ca (2+)-dependent manner. Contains mostly 4-hydroxyproline. Proline residues at the third position of the tripeptide repeating unit (G-X-Y) are hydroxylated in some or all of the chains. Post-translationally, contains 3-hydroxyproline at a few sites. This modification occurs on the first proline residue in the sequence motif Gly-Pro-Hyp, where Hyp is 4-hydroxyproline. In terms of processing, lysine residues at the third position of the tripeptide repeating unit (G-X-Y) are 5-hydroxylated in some or all of the chains. O-glycosylated on hydroxylated lysine residues. The O-linked glycan consists of a Glc-Gal disaccharide. In terms of tissue distribution, forms the fibrils of tendon, ligaments and bones. In bones the fibrils are mineralized with calcium hydroxyapatite.

The protein localises to the secreted. It localises to the extracellular space. Its subcellular location is the extracellular matrix. Type I collagen is a member of group I collagen (fibrillar forming collagen). The polypeptide is Collagen alpha-1(I) chain (COL1A1) (Bos taurus (Bovine)).